Reading from the N-terminus, the 509-residue chain is Anaerobic nitric oxide reductase transcription regulator NorR (509 aa).

A 4-aspartylphosphate modification is found at Asp56. The region spanning 186 to 415 (MIGRSPAMDR…LEHAIHRAAV (230 aa)) is the Sigma-54 factor interaction domain. ATP-binding positions include 214-221 (GETGVGKE) and 277-286 (ADKGTLFLDE). Positions 484–503 (WAATARALEMDGGNLHRLAR) form a DNA-binding region, H-T-H motif.

Its pathway is nitrogen metabolism; nitric oxide reduction. Functionally, required for the expression of anaerobic nitric oxide (NO) reductase, acts as a transcriptional activator for at least the norVW operon. Activation also requires sigma-54. The chain is Anaerobic nitric oxide reductase transcription regulator NorR from Aeromonas salmonicida (strain A449).